Here is an 84-residue protein sequence, read N- to C-terminus: UPF0410 protein YmgE (84 aa).

A run of 3 helical transmembrane segments spans residues methionine 1–methionine 21, glycine 27–alanine 47, and glycine 58–phenylalanine 78.

It belongs to the UPF0410 family.

The protein localises to the cell inner membrane. The protein is UPF0410 protein YmgE (ymgE) of Escherichia coli (strain K12).